Reading from the N-terminus, the 767-residue chain is Slo-interacting protein 1 (767 aa).

The PDZ domain maps to 202 to 280 (QQSSTDTNKG…SVTLLVSRIL (79 aa)). Disordered regions lie at residues 521–557 (GNAA…NPDE) and 744–767 (KEER…QQQQ). The span at 532-555 (NSSSAYNTGDSNNSASPHQNTTNP) shows a compositional bias: polar residues. A compositionally biased stretch (basic and acidic residues) spans 744-755 (KEERKRHIERAR).

In terms of assembly, interacts with Slo. In embryos, it is expressed throughout the CNS and in several peripheral locations. Colocalizes with Slo.

Functionally, may selectively reduce calcium-activated potassium channel (Slo) currents by reducing the number of Slo channels in the plasma membrane. The protein is Slo-interacting protein 1 (Slip1) of Drosophila melanogaster (Fruit fly).